Consider the following 362-residue polypeptide: UDP-N-acetylglucosamine--N-acetylmuramyl-(pentapeptide) pyrophosphoryl-undecaprenol N-acetylglucosamine transferase (362 aa).

Residues 10-12 (TGG), asparagine 124, serine 194, isoleucine 249, and glutamine 294 contribute to the UDP-N-acetyl-alpha-D-glucosamine site.

It belongs to the glycosyltransferase 28 family. MurG subfamily.

The protein localises to the cell membrane. The enzyme catalyses Mur2Ac(oyl-L-Ala-gamma-D-Glu-L-Lys-D-Ala-D-Ala)-di-trans,octa-cis-undecaprenyl diphosphate + UDP-N-acetyl-alpha-D-glucosamine = beta-D-GlcNAc-(1-&gt;4)-Mur2Ac(oyl-L-Ala-gamma-D-Glu-L-Lys-D-Ala-D-Ala)-di-trans,octa-cis-undecaprenyl diphosphate + UDP + H(+). It participates in cell wall biogenesis; peptidoglycan biosynthesis. Its function is as follows. Cell wall formation. Catalyzes the transfer of a GlcNAc subunit on undecaprenyl-pyrophosphoryl-MurNAc-pentapeptide (lipid intermediate I) to form undecaprenyl-pyrophosphoryl-MurNAc-(pentapeptide)GlcNAc (lipid intermediate II). The protein is UDP-N-acetylglucosamine--N-acetylmuramyl-(pentapeptide) pyrophosphoryl-undecaprenol N-acetylglucosamine transferase of Pediococcus pentosaceus (strain ATCC 25745 / CCUG 21536 / LMG 10740 / 183-1w).